The following is a 581-amino-acid chain: DNA primase (581 aa).

A CHC2-type zinc finger spans residues 40–64 (CPFHNEKTPSFTVNGEKQFYHCFGC). Positions 259 to 341 (NRLLVVEGYM…GRQLRFMFLP (83 aa)) constitute a Toprim domain. 3 residues coordinate Mg(2+): Glu265, Asp309, and Asp311.

The protein belongs to the DnaG primase family. Monomer. Interacts with DnaB. The cofactor is Zn(2+). Mg(2+) is required as a cofactor.

The catalysed reaction is ssDNA + n NTP = ssDNA/pppN(pN)n-1 hybrid + (n-1) diphosphate.. RNA polymerase that catalyzes the synthesis of short RNA molecules used as primers for DNA polymerase during DNA replication. The protein is DNA primase of Shigella flexneri.